A 222-amino-acid polypeptide reads, in one-letter code: Large ribosomal subunit protein uL3 (222 aa).

The disordered stretch occupies residues 129-150; it reads HNFRGLPDSHGTERKHRSPGSI.

It belongs to the universal ribosomal protein uL3 family. Part of the 50S ribosomal subunit. Forms a cluster with proteins L14 and L19.

One of the primary rRNA binding proteins, it binds directly near the 3'-end of the 23S rRNA, where it nucleates assembly of the 50S subunit. In Acidothermus cellulolyticus (strain ATCC 43068 / DSM 8971 / 11B), this protein is Large ribosomal subunit protein uL3.